A 65-amino-acid polypeptide reads, in one-letter code: Small ribosomal subunit protein eS27 (65 aa).

Zn(2+) contacts are provided by Cys-21, Cys-24, Cys-40, and Cys-43. The C4-type zinc finger occupies 21 to 43 (CKDCGNVQVVFARPSSVVTCNIC).

Belongs to the eukaryotic ribosomal protein eS27 family. Part of the 30S ribosomal subunit. Zn(2+) is required as a cofactor.

In Thermoplasma volcanium (strain ATCC 51530 / DSM 4299 / JCM 9571 / NBRC 15438 / GSS1), this protein is Small ribosomal subunit protein eS27.